The primary structure comprises 824 residues: Kinesin-like protein KIFC3 (824 aa).

A disordered region spans residues 27–79 (EPKPGMARPAPASPAARPFPHTGQGRLRTGRGKDILPSGEEDSTSRTAARPSL). Over residues 33–46 (ARPAPASPAARPFP) the composition is skewed to low complexity. 2 coiled-coil regions span residues 100–360 (LTVQ…ENLA) and 393–430 (LLQE…LQLR). Positions 443 to 766 (NIRVIARVRP…LRFAERVRSV (324 aa)) constitute a Kinesin motor domain. 526–533 (GQTGAGKT) lines the ATP pocket. Residues 771-824 (GSRRTELGSWSSQEHLEWEPACQTPQPTARAHSAPGSGTSSRPGSIRRKLQPSA) are disordered. S811 and S815 each carry phosphoserine. Basic residues predominate over residues 815 to 824 (SIRRKLQPSA).

The protein belongs to the TRAFAC class myosin-kinesin ATPase superfamily. Kinesin family. Interacts with annexin XIIIB. Predominant expression in the kidney, testis and ovary. Also expressed in brain, heart, liver, lung and uterus.

The protein resides in the cytoplasm. Its subcellular location is the cytoskeleton. It is found in the cytoplasmic vesicle membrane. The protein localises to the cell junction. It localises to the adherens junction. The protein resides in the microtubule organizing center. Its subcellular location is the centrosome. Functionally, minus-end microtubule-dependent motor protein. Involved in apically targeted transport. Required for zonula adherens maintenance. The protein is Kinesin-like protein KIFC3 (Kifc3) of Mus musculus (Mouse).